Reading from the N-terminus, the 221-residue chain is SIN3-HDAC complex-associated factor (221 aa).

2 disordered regions span residues 110–153 (KLQK…ASSS) and 201–221 (AAAE…TQEW). Residues 111 to 121 (LQKEFKRHNSD) show a composition bias toward basic and acidic residues. The span at 124-135 (STTSSASPAQSP) shows a compositional bias: low complexity. Polar residues predominate over residues 136–153 (CYSNQSDEGSDTEMASSS).

The protein belongs to the SINHCAF family. As to quaternary structure, component of the Sin3/HDAC corepressor complex at least composed of BRMS1, BRMS1L, ING2, SAP30, SAP30L, HDAC1. Found in a complex composed of at least SINHCAF, SIN3A, HDAC1, SAP30, RBBP4, OGT and TET1. Interacts with SIN3A and OGT. Embryonic stem cells (at protein level).

It is found in the nucleus. Functionally, subunit of the Sin3 deacetylase complex (Sin3/HDAC), this subunit is important for the repression of genes encoding components of the TGF-beta signaling pathway. Core component of a SIN3A complex (composed of at least SINHCAF, SIN3A, HDAC1, SAP30, RBBP4, OGT and TET1) present in embryonic stem (ES) cells. Promotes the stability of SIN3A and its presence on chromatin and is essential for maintaining the potential of ES cells to proliferate rapidly, while ensuring a short G1-phase of the cell cycle, thereby preventing premature lineage priming. The chain is SIN3-HDAC complex-associated factor (Sinhcaf) from Mus musculus (Mouse).